A 727-amino-acid chain; its full sequence is MTVSENSVLETEVLVGGSAMPNERPGAMEPQKLSKMPEGFPRRSTVANGVRSRASRRFLVVGGALLLSLFAIYEMGAVFSIGGITPLEYLVLALFAVNFCWIALAFCSGIAGFLILLRKPRAKDLQVTELHTRTAILMPTYNESPDRVFSAVSVMAETLSQTGHGHAFDWFILSDTTDPDIALLEEQAFLVLRQETHKHSRVYYRRRRKNVARKAGNVADFCRRWGSRYDHLLVLDADSLMESSTITGLAQRMQADPDAGLIQTIPSLINGTTLMARLQQFAARIYGPVIGTGLGWWVQKEGNFWGHNAIIRTEAFMTAAGLPNLKGKPPFGGHIMSHDFVEAALIRRAGWSVVIAYDLPGSYEECPPSIIDLAVRDRRWCQGNLQHSRILPTKGLHWVSRLHLLTGIMAYLSSPFWLMLILTGLMLALQAHFIRPEYFTDQFSLFPTWPIMDSDRALRLFYITMGVLFGPKVFGVLLLLKDGEFARSVGGRIKAIFSVIFEVILSALIAPIMMFIHCGAVMSILMGRDSGWSPQRRDDGSMPWMTLIYRHRWHMLAGVMLGYAAILDSLTLLAWMSPALIGLWIAVPISAWTGSVKIGEVFKRAGILATPEERNPAQICLQAHEARAAYQKHIAEPWTLAQVLKDPALMELHLAMVDKQPLRAAGTPIEAMEAIVHVKVHEARCQQSALAVLNRQEMAMVLANPLMLRSLQKLPEQFVEEDLVSFC.

Residues 18–41 are disordered; that stretch reads SAMPNERPGAMEPQKLSKMPEGFP. Transmembrane regions (helical) follow at residues 58 to 78, 97 to 117, 278 to 298, 408 to 428, 460 to 480, 496 to 516, and 572 to 592; these read FLVV…MGAV, VNFC…LILL, LQQF…GWWV, IMAY…LMLA, LFYI…LLLL, IFSV…MMFI, and LLAW…ISAW.

The protein belongs to the glycosyltransferase 2 family. OpgH subfamily.

The protein localises to the cell inner membrane. It functions in the pathway glycan metabolism; osmoregulated periplasmic glucan (OPG) biosynthesis. Involved in the biosynthesis of osmoregulated periplasmic glucans (OPGs). In Shewanella baltica (strain OS155 / ATCC BAA-1091), this protein is Glucans biosynthesis glucosyltransferase H.